We begin with the raw amino-acid sequence, 202 residues long: Nuclear transcription factor Y subunit C-6 (202 aa).

Residues 1-16 (MAENNNNNGDNMNNDN) show a composition bias toward low complexity. Disordered stretches follow at residues 1-29 (MAENNNNNGDNMNNDNHQQPPSYSQLPPM) and 180-202 (AWPAAAGDGEDDAEDNGGNGGGN). Polar residues predominate over residues 17–29 (HQQPPSYSQLPPM).

This sequence belongs to the NFYC/HAP5 subunit family. As to quaternary structure, heterotrimeric transcription factor composed of three components, NF-YA, NF-YB and NF-YC. NF-YB and NF-YC must interact and dimerize for NF-YA association and DNA binding. In terms of tissue distribution, expressed in flowers and siliques.

It localises to the nucleus. Stimulates the transcription of various genes by recognizing and binding to a CCAAT motif in promoters. This Arabidopsis thaliana (Mouse-ear cress) protein is Nuclear transcription factor Y subunit C-6 (NFYC6).